Consider the following 912-residue polypeptide: Eukaryotic translation initiation factor 3 subunit C (912 aa).

The tract at residues Met1 to Asp44 is disordered. Residues Gly8–Glu21 show a composition bias toward low complexity. Residues Ser9, Ser11, Ser13, Ser15, Ser16, Ser18, and Ser39 each carry the phosphoserine modification. At Lys99 the chain carries N6-acetyllysine. Disordered regions lie at residues Thr157 to Gly305 and Gln521 to Glu541. Residues Ser166, Ser178, Ser181, and Ser182 each carry the phosphoserine modification. The span at Ser166–Gly190 shows a compositional bias: acidic residues. Residues Lys199–Glu215 are compositionally biased toward basic and acidic residues. Residues Asp216 to Ala229 are compositionally biased toward acidic residues. The span at Pro260 to Ala277 shows a compositional bias: basic and acidic residues. A compositionally biased stretch (polar residues) spans Gln521–Lys530. Thr523 is subject to Phosphothreonine. Lys642 bears the N6-acetyllysine mark. Positions Phe672–Pro848 constitute a PCI domain. The tract at residues Phe884–Tyr912 is disordered. Basic and acidic residues predominate over residues Arg885 to Met898. Ser908 carries the post-translational modification Phosphoserine.

It belongs to the eIF-3 subunit C family. Component of the eukaryotic translation initiation factor 3 (eIF-3) complex, which is composed of 13 subunits: EIF3A, EIF3B, EIF3C, EIF3D, EIF3E, EIF3F, EIF3G, EIF3H, EIF3I, EIF3J, EIF3K, EIF3L and EIF3M. The eIF-3 complex appears to include 3 stable modules: module A is composed of EIF3A, EIF3B, EIF3G and EIF3I; module B is composed of EIF3F, EIF3H, and EIF3M; and module C is composed of EIF3C, EIF3D, EIF3E, EIF3K and EIF3L. EIF3C of module C binds EIF3B of module A and EIF3H of module B, thereby linking the three modules. EIF3J is a labile subunit that binds to the eIF-3 complex via EIF3B. The eIF-3 complex interacts with RPS6KB1 under conditions of nutrient depletion. Mitogenic stimulation leads to binding and activation of a complex composed of MTOR and RPTOR, leading to phosphorylation and release of RPS6KB1 and binding of EIF4B to eIF-3. Identified in a HCV IRES-mediated translation complex, at least composed of EIF3C, IGF2BP1, RPS3 and HCV RNA-replicon. Interacts with ALKBH4, IFIT1 and IFIT2. Interacts with BZW2/5MP1. Post-translationally, phosphorylated. Phosphorylation is enhanced upon serum stimulation.

Its subcellular location is the cytoplasm. Functionally, component of the eukaryotic translation initiation factor 3 (eIF-3) complex, which is required for several steps in the initiation of protein synthesis. The eIF-3 complex associates with the 40S ribosome and facilitates the recruitment of eIF-1, eIF-1A, eIF-2:GTP:methionyl-tRNAi and eIF-5 to form the 43S pre-initiation complex (43S PIC). The eIF-3 complex stimulates mRNA recruitment to the 43S PIC and scanning of the mRNA for AUG recognition. The eIF-3 complex is also required for disassembly and recycling of post-termination ribosomal complexes and subsequently prevents premature joining of the 40S and 60S ribosomal subunits prior to initiation. The eIF-3 complex specifically targets and initiates translation of a subset of mRNAs involved in cell proliferation, including cell cycling, differentiation and apoptosis, and uses different modes of RNA stem-loop binding to exert either translational activation or repression. In Bos taurus (Bovine), this protein is Eukaryotic translation initiation factor 3 subunit C.